A 438-amino-acid polypeptide reads, in one-letter code: Glutamate-1-semialdehyde 2,1-aminomutase (438 aa).

Residue Lys-277 is modified to N6-(pyridoxal phosphate)lysine.

The protein belongs to the class-III pyridoxal-phosphate-dependent aminotransferase family. HemL subfamily. In terms of assembly, homodimer. Pyridoxal 5'-phosphate serves as cofactor.

It is found in the cytoplasm. It carries out the reaction (S)-4-amino-5-oxopentanoate = 5-aminolevulinate. The protein operates within porphyrin-containing compound metabolism; protoporphyrin-IX biosynthesis; 5-aminolevulinate from L-glutamyl-tRNA(Glu): step 2/2. It functions in the pathway porphyrin-containing compound metabolism; chlorophyll biosynthesis. The protein is Glutamate-1-semialdehyde 2,1-aminomutase of Synechococcus sp. (strain CC9311).